The chain runs to 1048 residues: FERM, ARHGEF and pleckstrin domain-containing protein 1 (1048 aa).

Residues 1 to 37 form a disordered region; sequence MGEIEQKPTPASRLGAPENSGISTLERGQKPPPTPSG. Phosphoserine is present on residues serine 20 and serine 23. Threonine 24 is modified (phosphothreonine). In terms of domain architecture, FERM spans 40-320; the sequence is MTVKIQMLDD…EHHAFFRLFE (281 aa). 7 positions are modified to phosphoserine: serine 340, serine 373, serine 389, serine 403, serine 427, serine 433, and serine 437. Residues 361-536 are disordered; the sequence is FERKHSKIHS…TDDEEEGRRK (176 aa). The segment covering 371–395 has biased composition (polar residues); it reads TRSLVSQPTAPNSEVPKQSPQSASL. 2 stretches are compositionally biased toward polar residues: residues 472–491 and 498–513; these read STGS…NSQG and VTLS…QASP. Phosphoserine occurs at positions 512 and 516. The DH domain maps to 542–733; the sequence is KAYYIAKEVS…TEMVAQLHGT (192 aa). Residues 762–859 enclose the PH 1 domain; the sequence is EFIRLGSLSK…WMEDIQMAID (98 aa). Phosphoserine occurs at positions 836, 875, and 881. Residues 865 to 907 form a disordered region; that stretch reads NGPTPELLASSPPDNKSPDEATAADQESEDDLSASRTSLERQA. Threonine 886 is subject to Phosphothreonine. Phosphoserine is present on residues serine 892, serine 899, and serine 902. The PH 2 domain maps to 935-1032; that stretch reads ENQLSGNLLR…WMEVIRSATS (98 aa).

As to quaternary structure, interacts with CADM1. Interacts with RAC1. In terms of tissue distribution, detected in brain cortex, hippocampus, striatum, olfactory bulb, cerebellum and hindbrain (at protein level).

The protein localises to the cell membrane. It is found in the synapse. The protein resides in the synaptosome. Its subcellular location is the cytoplasm. It localises to the cytosol. The protein localises to the cell projection. It is found in the filopodium. The protein resides in the dendrite. Its subcellular location is the dendritic spine. Its function is as follows. Functions as a guanine nucleotide exchange factor for RAC1. May play a role in semaphorin signaling. Plays a role in the assembly and disassembly of dendritic filopodia, the formation of dendritic spines, regulation of dendrite length and ultimately the formation of synapses. The chain is FERM, ARHGEF and pleckstrin domain-containing protein 1 (Farp1) from Mus musculus (Mouse).